We begin with the raw amino-acid sequence, 510 residues long: GMP synthase [glutamine-hydrolyzing] (510 aa).

In terms of domain architecture, Glutamine amidotransferase type-1 spans 5 to 195; sequence KILVLDFGGQ…LFKVCGVKGT (191 aa). Cys-82 functions as the Nucleophile in the catalytic mechanism. Catalysis depends on residues His-169 and Glu-171. In terms of domain architecture, GMPS ATP-PPase spans 196 to 385; it reads WNMADFINEE…LGLPDEIVWR (190 aa). An ATP-binding site is contributed by 223–229; the sequence is SGGVDSA.

In terms of assembly, homodimer.

It catalyses the reaction XMP + L-glutamine + ATP + H2O = GMP + L-glutamate + AMP + diphosphate + 2 H(+). Its pathway is purine metabolism; GMP biosynthesis; GMP from XMP (L-Gln route): step 1/1. Its function is as follows. Catalyzes the synthesis of GMP from XMP. This is GMP synthase [glutamine-hydrolyzing] from Halothermothrix orenii (strain H 168 / OCM 544 / DSM 9562).